Reading from the N-terminus, the 375-residue chain is Putative glycyl-radical enzyme activating enzyme MJ0021 (375 aa).

Residues 23–246 enclose the Radical SAM core domain; it reads QCVKGGKLVL…LKVIKEFKGD (224 aa). C38, C42, and C45 together coordinate [4Fe-4S] cluster. S-adenosyl-L-methionine is bound by residues 44–46 and G87; that span reads YCP.

This sequence belongs to the organic radical-activating enzymes family. Requires [4Fe-4S] cluster as cofactor.

The enzyme catalyses glycyl-[protein] + reduced [flavodoxin] + S-adenosyl-L-methionine = glycin-2-yl radical-[protein] + semiquinone [flavodoxin] + 5'-deoxyadenosine + L-methionine + H(+). This Methanocaldococcus jannaschii (strain ATCC 43067 / DSM 2661 / JAL-1 / JCM 10045 / NBRC 100440) (Methanococcus jannaschii) protein is Putative glycyl-radical enzyme activating enzyme MJ0021.